Here is a 360-residue protein sequence, read N- to C-terminus: MTIILKDLSNSSILWEGFEDEFGNYSGTPPTEDYDYSPCEISTETLNKYAVVVIDALVFLLSLLGNSLVMLVILYSRIGRSVTDVYLLNLAMADLLFAMTLPIWTASKAKGWVFGTPLCKVVSLLKEVNFYSGILLLACISMDRYLAIVHATRTLTQKWHWVKFICLGIWALSVILALPIFIFREAYQPPYSDLVCYEDLGANTTKWRMIMRVLPQTFGFLLPLLVMLFCYGFTLRTLFSAQMGHKHRAMRVIFAVVLVFLLCWLPYNLVLIADTLMRAHVIAETCQRRNDIGRALDATEILGFLHSCLNPLIYVFIGQKFRHGLLKIMAIHGLISKEFLAKDGRPSFVGSSSGNTSTTL.

The Extracellular segment spans residues 1-48 (MTIILKDLSNSSILWEGFEDEFGNYSGTPPTEDYDYSPCEISTETLNK). N-linked (GlcNAc...) asparagine glycans are attached at residues N10 and N24. Residues 49 to 75 (YAVVVIDALVFLLSLLGNSLVMLVILY) traverse the membrane as a helical segment. The Cytoplasmic segment spans residues 76-84 (SRIGRSVTD). A helical transmembrane segment spans residues 85-105 (VYLLNLAMADLLFAMTLPIWT). The Extracellular portion of the chain corresponds to 106–120 (ASKAKGWVFGTPLCK). An intrachain disulfide couples C119 to C196. A helical transmembrane segment spans residues 121–142 (VVSLLKEVNFYSGILLLACISM). At 143–163 (DRYLAIVHATRTLTQKWHWVK) the chain is on the cytoplasmic side. The helical transmembrane segment at 164 to 183 (FICLGIWALSVILALPIFIF) threads the bilayer. The Extracellular segment spans residues 184–208 (REAYQPPYSDLVCYEDLGANTTKWR). Residues 209-231 (MIMRVLPQTFGFLLPLLVMLFCY) form a helical membrane-spanning segment. At 232–251 (GFTLRTLFSAQMGHKHRAMR) the chain is on the cytoplasmic side. Residues 252 to 273 (VIFAVVLVFLLCWLPYNLVLIA) form a helical membrane-spanning segment. The Extracellular portion of the chain corresponds to 274–294 (DTLMRAHVIAETCQRRNDIGR). Residues 295 to 315 (ALDATEILGFLHSCLNPLIYV) traverse the membrane as a helical segment. Over 316–360 (FIGQKFRHGLLKIMAIHGLISKEFLAKDGRPSFVGSSSGNTSTTL) the chain is Cytoplasmic.

It belongs to the G-protein coupled receptor 1 family. Interacts with IL8. Interacts with GNAI2. Post-translationally, phosphorylated upon ligand binding; which is required for desensitization.

It localises to the cell membrane. In terms of biological role, receptor for interleukin-8 which is a powerful neutrophil chemotactic factor. Binding of IL-8 to the receptor causes activation of neutrophils. This response is mediated via a G-protein that activates a phosphatidylinositol-calcium second messenger system. Binds to IL-8 with high affinity. Also binds with high affinity to CXCL3, GRO/MGSA and NAP-2. The protein is C-X-C chemokine receptor type 2 (CXCR2) of Bos taurus (Bovine).